Consider the following 728-residue polypeptide: Catalase-peroxidase 2 (728 aa).

The segment at 1 to 20 (MSNEGKCPFNHGKRNGTTNR) is disordered. The segment at residues 91–214 (WHSAGTYRTG…LAAVQMGLIY (124 aa)) is a cross-link (tryptophyl-tyrosyl-methioninium (Trp-Tyr) (with M-240)). The Proton acceptor role is filled by His92. A cross-link (tryptophyl-tyrosyl-methioninium (Tyr-Met) (with W-91)) is located at residues 214-240 (YVNPEGPNGNPDPLASARDIRETFARM). His255 serves as a coordination point for heme b. The disordered stretch occupies residues 335-355 (AHQWQPKGGAGADSVPDPFEP).

Belongs to the peroxidase family. Peroxidase/catalase subfamily. In terms of assembly, homodimer or homotetramer. Heme b serves as cofactor. In terms of processing, formation of the three residue Trp-Tyr-Met cross-link is important for the catalase, but not the peroxidase activity of the enzyme.

It carries out the reaction H2O2 + AH2 = A + 2 H2O. The enzyme catalyses 2 H2O2 = O2 + 2 H2O. Its function is as follows. Bifunctional enzyme with both catalase and broad-spectrum peroxidase activity. In Burkholderia cenocepacia (strain HI2424), this protein is Catalase-peroxidase 2.